The sequence spans 426 residues: Glutamate-1-semialdehyde 2,1-aminomutase 2 (426 aa).

K265 carries the post-translational modification N6-(pyridoxal phosphate)lysine.

It belongs to the class-III pyridoxal-phosphate-dependent aminotransferase family. HemL subfamily. As to quaternary structure, homodimer. It depends on pyridoxal 5'-phosphate as a cofactor.

Its subcellular location is the cytoplasm. It catalyses the reaction (S)-4-amino-5-oxopentanoate = 5-aminolevulinate. It participates in porphyrin-containing compound metabolism; protoporphyrin-IX biosynthesis; 5-aminolevulinate from L-glutamyl-tRNA(Glu): step 2/2. The polypeptide is Glutamate-1-semialdehyde 2,1-aminomutase 2 (Lachnoclostridium phytofermentans (strain ATCC 700394 / DSM 18823 / ISDg) (Clostridium phytofermentans)).